The sequence spans 244 residues: U11/U12 small nuclear ribonucleoprotein 35 kDa protein (244 aa).

In terms of domain architecture, RRM spans 51 to 129; the sequence is LTLFVARLNS…HEIFVDYELE (79 aa). Positions 146 to 162 are enriched in basic and acidic residues; the sequence is GKKESGQLRFGGRDRPF. The tract at residues 146-244 is disordered; that stretch reads GKKESGQLRF…KTRDKRDRSK (99 aa). A Glycyl lysine isopeptide (Lys-Gly) (interchain with G-Cter in SUMO2) cross-link involves residue Lys-172. 2 stretches are compositionally biased toward basic and acidic residues: residues 173 to 185 and 192 to 244; these read NEPHREGKRERRE and RHWD…DRSK.

Component of the U11/U12 snRNPs that are part of the U12-type spliceosome.

It is found in the nucleus. This Rattus norvegicus (Rat) protein is U11/U12 small nuclear ribonucleoprotein 35 kDa protein (Snrnp35).